Reading from the N-terminus, the 155-residue chain is 6,7-dimethyl-8-ribityllumazine synthase (155 aa).

5-amino-6-(D-ribitylamino)uracil-binding positions include Trp-18, 52-54 (AFE), and 76-78 (LVV). Arg-84 acts as the Proton donor in catalysis. Ser-109 lines the 5-amino-6-(D-ribitylamino)uracil pocket. Position 123 (His-123) interacts with (2S)-2-hydroxy-3-oxobutyl phosphate.

Belongs to the DMRL synthase family.

The catalysed reaction is (2S)-2-hydroxy-3-oxobutyl phosphate + 5-amino-6-(D-ribitylamino)uracil = 6,7-dimethyl-8-(1-D-ribityl)lumazine + phosphate + 2 H2O + H(+). The protein operates within cofactor biosynthesis; riboflavin biosynthesis; riboflavin from 2-hydroxy-3-oxobutyl phosphate and 5-amino-6-(D-ribitylamino)uracil: step 1/2. Functionally, catalyzes the formation of 6,7-dimethyl-8-ribityllumazine by condensation of 5-amino-6-(D-ribitylamino)uracil with 3,4-dihydroxy-2-butanone 4-phosphate. This is the penultimate step in the biosynthesis of riboflavin. The polypeptide is 6,7-dimethyl-8-ribityllumazine synthase (Rhodococcus erythropolis (Arthrobacter picolinophilus)).